The primary structure comprises 327 residues: Eukaryotic translation initiation factor 3 subunit I (327 aa).

WD repeat units follow at residues 8–47 (GHQR…RLGT), 50–89 (GHIG…ALGK), 147–186 (EQQS…ELNS), 189–228 (DHTA…CLKT), and 286–327 (GHFG…HTFE).

It belongs to the eIF-3 subunit I family. Component of the eukaryotic translation initiation factor 3 (eIF-3) complex.

Its subcellular location is the cytoplasm. In terms of biological role, component of the eukaryotic translation initiation factor 3 (eIF-3) complex, which is involved in protein synthesis of a specialized repertoire of mRNAs and, together with other initiation factors, stimulates binding of mRNA and methionyl-tRNAi to the 40S ribosome. The eIF-3 complex specifically targets and initiates translation of a subset of mRNAs involved in cell proliferation. The polypeptide is Eukaryotic translation initiation factor 3 subunit I (Anopheles gambiae (African malaria mosquito)).